The following is a 53-amino-acid chain: Large ribosomal subunit protein bL32c (53 aa).

This sequence belongs to the bacterial ribosomal protein bL32 family.

It localises to the plastid. The protein resides in the chloroplast. In Coffea arabica (Arabian coffee), this protein is Large ribosomal subunit protein bL32c.